Here is a 198-residue protein sequence, read N- to C-terminus: Ion-translocating oxidoreductase complex subunit B (198 aa).

The segment at 1-28 (MIITTVYFILVAIAVLALIFGAILGFAS) is hydrophobic. Positions 34-92 (EADPIVEKIDALLPQSQCGQCGYPGCKPYAEAIANGDDITKCIPGGQTVIVNIAELMGV) constitute a 4Fe-4S domain. The [4Fe-4S] cluster site is built by Cys-51, Cys-54, Cys-59, Cys-75, Cys-115, Cys-118, Cys-121, Cys-125, Cys-145, Cys-148, Cys-151, and Cys-155. 4Fe-4S ferredoxin-type domains follow at residues 106–135 (MVAFIDEDMCIGCTKCIQACPVDAIIGTNK) and 136–165 (AMHTIIPDLCTGCELCVPPCPTDCISMIKV).

Belongs to the 4Fe4S bacterial-type ferredoxin family. RnfB subfamily. The complex is composed of six subunits: RnfA, RnfB, RnfC, RnfD, RnfE and RnfG. Requires [4Fe-4S] cluster as cofactor.

It localises to the cell inner membrane. Its function is as follows. Part of a membrane-bound complex that couples electron transfer with translocation of ions across the membrane. This is Ion-translocating oxidoreductase complex subunit B from Pasteurella multocida (strain Pm70).